A 381-amino-acid polypeptide reads, in one-letter code: S-adenosylmethionine synthase (381 aa).

Position 15 (His15) interacts with ATP. Asp17 lines the Mg(2+) pocket. Residue Glu43 participates in K(+) binding. 2 residues coordinate L-methionine: Glu56 and Gln99. Residues 99–109 (QSLDIAQGVDN) form a flexible loop region. ATP is bound by residues 164-166 (DGK), 230-231 (RF), Asp239, 245-246 (RK), and Lys266. An L-methionine-binding site is contributed by Asp239. An L-methionine-binding site is contributed by Lys270.

It belongs to the AdoMet synthase family. Homotetramer; dimer of dimers. Mg(2+) serves as cofactor. It depends on K(+) as a cofactor.

It is found in the cytoplasm. It catalyses the reaction L-methionine + ATP + H2O = S-adenosyl-L-methionine + phosphate + diphosphate. It participates in amino-acid biosynthesis; S-adenosyl-L-methionine biosynthesis; S-adenosyl-L-methionine from L-methionine: step 1/1. In terms of biological role, catalyzes the formation of S-adenosylmethionine (AdoMet) from methionine and ATP. The overall synthetic reaction is composed of two sequential steps, AdoMet formation and the subsequent tripolyphosphate hydrolysis which occurs prior to release of AdoMet from the enzyme. The sequence is that of S-adenosylmethionine synthase from Legionella jeonii.